Consider the following 519-residue polypeptide: MRPLVFDNRFVRELPADPETGPHTRQVAGASYSRVNPTPVAAPHLVAHSAEVAALLGWDESDIASPEFAEVFGGNRLLDGMEPYAACYGGHQFGNWAGQLGDGRAITLGEVLNGQGGRWELQLKGAGPTPYSRRADGRAVLRSSIREFLCSEAMHHLGVPTTRALSLVGTGEKVVRDMFYDGNPQAEPGAIVCRVAPSFIRFGNFELLAARGDLDLLNRLIDFTIARDFPGIEGSARDKRARWFETVCARTATMVAHWMRVGFVHGVMNTDNMSILGLTIDYGPYGWVDNFDPGWTPNTTDAGGRRYRFGHQPRIANWNLLQLANALFPAFGSTEALQAGLNTYAEVYDRESRAMTAAKLGLAALADADLPMVDALHGWMKRAEVDMTLFFRALAEVDLLKPDPALFLDAFYDDAKRLETAEEFSGWLRLYADRCRQEGLDADQRRARMNAANPRYVMRNYLAQQAIDAAEQGDYGPVRSLLDVMRRPYDEQPERAAYAQRRPDWARERAGCSMLSCSS.

Residues glycine 101, glycine 103, arginine 104, lysine 124, aspartate 136, glycine 137, arginine 194, and arginine 201 each contribute to the ATP site. The active-site Proton acceptor is the aspartate 271. Asparagine 272 and aspartate 281 together coordinate Mg(2+). Aspartate 281 serves as a coordination point for ATP.

This sequence belongs to the SELO family. Mg(2+) serves as cofactor. Requires Mn(2+) as cofactor.

The catalysed reaction is L-seryl-[protein] + ATP = 3-O-(5'-adenylyl)-L-seryl-[protein] + diphosphate. The enzyme catalyses L-threonyl-[protein] + ATP = 3-O-(5'-adenylyl)-L-threonyl-[protein] + diphosphate. It catalyses the reaction L-tyrosyl-[protein] + ATP = O-(5'-adenylyl)-L-tyrosyl-[protein] + diphosphate. It carries out the reaction L-histidyl-[protein] + UTP = N(tele)-(5'-uridylyl)-L-histidyl-[protein] + diphosphate. The catalysed reaction is L-seryl-[protein] + UTP = O-(5'-uridylyl)-L-seryl-[protein] + diphosphate. The enzyme catalyses L-tyrosyl-[protein] + UTP = O-(5'-uridylyl)-L-tyrosyl-[protein] + diphosphate. In terms of biological role, nucleotidyltransferase involved in the post-translational modification of proteins. It can catalyze the addition of adenosine monophosphate (AMP) or uridine monophosphate (UMP) to a protein, resulting in modifications known as AMPylation and UMPylation. The chain is Protein nucleotidyltransferase YdiU from Azoarcus sp. (strain BH72).